A 623-amino-acid polypeptide reads, in one-letter code: Kelch-like protein diablo (623 aa).

The disordered stretch occupies residues 1–54 (MGDLPGSGSTAQPRDAAVTGTGGNSTAGGGSSVGSTAVDRPPSPARLSHTSEKH). Phosphothreonine is present on T19. Over residues 20 to 32 (GTGGNSTAGGGSS) the composition is skewed to gly residues. The BTB domain occupies 72–139 (CDVVLNVGGR…CYTAHIMVEE (68 aa)). One can recognise a BACK domain in the interval 174–276 (CLGIRAFADT…SPKFLVGTVG (103 aa)). Kelch repeat units lie at residues 323 to 369 (VLFA…VLND), 371 to 417 (LYAV…VLDG), 418 to 464 (FLYA…VLGG), 466 to 511 (LYAI…VFNN), 513 to 558 (IYAV…VVNG), and 559 to 605 (QLYA…VMRA).

It participates in protein modification; protein ubiquitination. Functionally, probable substrate-specific adapter of an E3 ubiquitin-protein ligase complex which mediates the ubiquitination and subsequent proteasomal degradation of target proteins. May have a role in synapse differentiation and growth. In Drosophila erecta (Fruit fly), this protein is Kelch-like protein diablo.